The sequence spans 147 residues: 3-dehydroquinate dehydratase (147 aa).

Tyrosine 24 acts as the Proton acceptor in catalysis. Substrate contacts are provided by asparagine 75, histidine 81, and aspartate 88. The active-site Proton donor is histidine 101. Substrate contacts are provided by residues 102-103 (IS) and arginine 112.

This sequence belongs to the type-II 3-dehydroquinase family. Homododecamer.

It carries out the reaction 3-dehydroquinate = 3-dehydroshikimate + H2O. It participates in metabolic intermediate biosynthesis; chorismate biosynthesis; chorismate from D-erythrose 4-phosphate and phosphoenolpyruvate: step 3/7. Functionally, catalyzes a trans-dehydration via an enolate intermediate. The protein is 3-dehydroquinate dehydratase of Cereibacter sphaeroides (strain ATCC 17029 / ATH 2.4.9) (Rhodobacter sphaeroides).